A 269-amino-acid polypeptide reads, in one-letter code: Phosphate import ATP-binding protein PstB (269 aa).

The ABC transporter domain maps to 21 to 264 (IEIKDFNFFY…PKDRRTENYI (244 aa)). 55–62 (GPSGCGKT) lines the ATP pocket.

The protein belongs to the ABC transporter superfamily. Phosphate importer (TC 3.A.1.7) family. In terms of assembly, the complex is composed of two ATP-binding proteins (PstB), two transmembrane proteins (PstC and PstA) and a solute-binding protein (PstS).

It is found in the cell membrane. The enzyme catalyses phosphate(out) + ATP + H2O = ADP + 2 phosphate(in) + H(+). Its function is as follows. Part of the ABC transporter complex PstSACB involved in phosphate import. Responsible for energy coupling to the transport system. The protein is Phosphate import ATP-binding protein PstB of Mycoplasma capricolum subsp. capricolum (strain California kid / ATCC 27343 / NCTC 10154).